The sequence spans 458 residues: ATP synthase subunit beta (458 aa).

148 to 155 (GGAGVGKT) contributes to the ATP binding site.

The protein belongs to the ATPase alpha/beta chains family. In terms of assembly, F-type ATPases have 2 components, CF(1) - the catalytic core - and CF(0) - the membrane proton channel. CF(1) has five subunits: alpha(3), beta(3), gamma(1), delta(1), epsilon(1). CF(0) has three main subunits: a(1), b(2) and c(9-12). The alpha and beta chains form an alternating ring which encloses part of the gamma chain. CF(1) is attached to CF(0) by a central stalk formed by the gamma and epsilon chains, while a peripheral stalk is formed by the delta and b chains.

The protein resides in the cell inner membrane. The enzyme catalyses ATP + H2O + 4 H(+)(in) = ADP + phosphate + 5 H(+)(out). Its function is as follows. Produces ATP from ADP in the presence of a proton gradient across the membrane. The catalytic sites are hosted primarily by the beta subunits. The chain is ATP synthase subunit beta from Shewanella pealeana (strain ATCC 700345 / ANG-SQ1).